The primary structure comprises 204 residues: Glideosome-associated protein 45 (204 aa).

Residues 1-86 (MGNKCSRSKV…KEEIDYATQE (86 aa)) form a disordered region. The N-myristoyl glycine moiety is linked to residue Gly-2. Positions 2-29 (GNKCSRSKVKEPKRKDIDELAERENLKK) are targets GAP45 to the cell membrane; however, dispensable for the formation of the glideosome complex and the association with the inner membrane complex. A compositionally biased stretch (basic and acidic residues) spans 9–53 (KVKEPKRKDIDELAERENLKKQSEEIIEEKPEEVVEQVEETHEEP). The span at 54-73 (LEQEQELDEQKIEEEEEEPE) shows a compositional bias: acidic residues. A Phosphoserine; by CPK10 modification is found at Ser-89. At Ser-103 the chain carries Phosphoserine; by CPK10 and PKB. Ser-149 is modified (phosphoserine; by CPK10).

Component of the glideosome complex composed of GAP50, GAP45, MTIP and MyoA; the complex is formed during the late schizont stage and in merozoites. MyoA, MTIP and GAP45 probably form an initial complex in the cytoplasm which is then recruited to the outer face of the inner membrane complex via the interaction with GAP50. Interacts with GAP50; the interaction is independent of GAP45 phosphorylation status and can also occur independently of the formation of the glideosome complex. Post-translationally, phosphorylated at multiple sites. Phosphorylation increases during the schizont stage and peaks in segmented merozoites. May be phosphorylated by PKB. In schizonts, phosphorylated at Ser-89 and Ser-149 in response to phospholipase C-mediated calcium release. Phosphorylation at Ser-149 begins in early schizonts while phosphorylation at Ser-103 begins in late schizonts. Phosphorylation at Ser-89, Ser-103 and Ser-149 appears to be dispensable for GAP45 inner membrane complex localization or GAP45 inclusion in the glideosome complex. Phosphorylation is not required for interaction with GAP50; however, it may regulate the interaction with MTIP and MyoA. N-myristoylated by NMT. N-myristoylation may contribute to the targeting of GAP45 to the inner membrane complex with the subsequent palmitoylation strengthening the interaction with the membrane. In terms of processing, palmitoylated. Palmitoylation appears to follow N-myristoylation and may strengthen the interaction with the inner membrane complex.

It localises to the inner membrane complex. In terms of biological role, component of the glideosome complex, an inner membrane complex structure involved in parasite gliding motility and host cell invasion. During the asexual blood stage, required in schizonts to recruit MTIP and MyoA to the inner membrane complex where they assemble with GAP50 to form the glideosome complex. By regulating the formation of the glideosome, plays an essential role during merozoite invasion of host erythrocytes. The chain is Glideosome-associated protein 45 from Plasmodium falciparum (isolate 3D7).